The chain runs to 159 residues: uncharacterized protein (159 aa).

The next 2 helical transmembrane spans lie at isoleucine 59 to tyrosine 79 and valine 91 to cysteine 113.

It localises to the cell membrane. This is an uncharacterized protein from Treponema pallidum (strain Nichols).